Reading from the N-terminus, the 144-residue chain is MPKNKGKGGKNRRRGKNENESEKRELVFKEDGQEYAQVIKMLGNGRLEAMCFDGVRRLCHIRGKLRKKVWINTSDIILIGLRDYQDNKADVILKYNADEARSLKAYGELPEHAKINETDTFGPGDDDEIQFDDIGDDDEDIDDI.

Basic residues predominate over residues 1–15; it reads MPKNKGKGGKNRRRG. Disordered regions lie at residues 1–26 and 114–144; these read MPKN…KREL and KINE…IDDI. Over residues 16–26 the composition is skewed to basic and acidic residues; the sequence is KNENESEKREL. One can recognise an S1-like domain in the interval 22–96; it reads EKRELVFKED…NKADVILKYN (75 aa). Acidic residues predominate over residues 124–144; sequence GDDDEIQFDDIGDDDEDIDDI.

Belongs to the eIF-1A family. In terms of assembly, component of the 43S pre-initiation complex (43S PIC), which is composed of the 40S ribosomal subunit, EIF1, eIF1A (EIF1AX), eIF3 complex, EIF5 and eIF2-GTP-initiator tRNA complex (eIF2 ternary complex). Interacts with EIF5; this interaction contributes to the maintenance of EIF1 within the open 43S PIC. Interacts through its C-terminal domain (CTD) with the CTD of EIF5B; from the location of the start codon by the 43S complex until the formation of the 80S complex.

Its subcellular location is the cytoplasm. Its function is as follows. Component of the 43S pre-initiation complex (43S PIC), which binds to the mRNA cap-proximal region, scans mRNA 5'-untranslated region, and locates the initiation codon. This protein enhances formation of the cap-proximal complex. Together with EIF1, facilitates scanning, start codon recognition, promotion of the assembly of 48S complex at the initiation codon (43S PIC becomes 48S PIC after the start codon is reached), and dissociation of aberrant complexes. After start codon location, together with EIF5B orients the initiator methionine-tRNA in a conformation that allows 60S ribosomal subunit joining to form the 80S initiation complex. Is released after 80S initiation complex formation, just after GTP hydrolysis by EIF5B, and before release of EIF5B. Its globular part is located in the A site of the 40S ribosomal subunit. Its interaction with EIF5 during scanning contribute to the maintenance of EIF1 within the open 43S PIC. In contrast to yeast orthologs, does not bind EIF1. The sequence is that of Eukaryotic translation initiation factor 1A (Eif1a) from Mus musculus (Mouse).